We begin with the raw amino-acid sequence, 310 residues long: tRNA uridine(34) hydroxylase (310 aa).

The region spanning 134–232 is the Rhodanese domain; the sequence is DDPDTLLIDT…YFEEVSQSES (99 aa). C192 (cysteine persulfide intermediate) is an active-site residue.

This sequence belongs to the TrhO family.

The enzyme catalyses uridine(34) in tRNA + AH2 + O2 = 5-hydroxyuridine(34) in tRNA + A + H2O. Functionally, catalyzes oxygen-dependent 5-hydroxyuridine (ho5U) modification at position 34 in tRNAs. The chain is tRNA uridine(34) hydroxylase from Prochlorococcus marinus (strain MIT 9303).